The chain runs to 111 residues: Large ribosomal subunit protein P2w (111 aa).

The disordered stretch occupies residues 63-111 (ASVPSGGGVAVSAAPSSGGGGAAAPAEKKEAKKEEKEESDDDMGFSLFE). Over residues 88 to 98 (AEKKEAKKEEK) the composition is skewed to basic and acidic residues. Position 101 is a phosphoserine (serine 101).

This sequence belongs to the eukaryotic ribosomal protein P1/P2 family. As to quaternary structure, P1 and P2 exist as dimers at the large ribosomal subunit.

In terms of biological role, plays an important role in the elongation step of protein synthesis. The polypeptide is Large ribosomal subunit protein P2w (RPP2D) (Arabidopsis thaliana (Mouse-ear cress)).